The chain runs to 62 residues: MVLRRLSRQASVKVRRSWTESKKTAQRLFVFVLELLLQFCEGEDTVDGKRKKPERLTEKPES.

Residues 1 to 23 are Cytoplasmic-facing; sequence MVLRRLSRQASVKVRRSWTESKK. Residues 24 to 40 traverse the membrane as a helical; Signal-anchor for type II membrane protein segment; sequence TAQRLFVFVLELLLQFC. The Extracellular portion of the chain corresponds to 41–62; it reads EGEDTVDGKRKKPERLTEKPES.

It belongs to the polyomaviruses agnoprotein family. Homooligomer. Interacts with VP1. Interacts with large T antigen; this interaction may impact upon the activity of T-antigen on the control of viral gene transcription and replication. Interacts with small t antigen. Interacts with host CBX5; this interaction induces the dissociation of CBX5 from LBR, resulting in destabilization of the nuclear envelope. Post-translationally, phosphorylated by host kinase. Phosphorylation segregates agnoprotein in cytoplasm, whereas unphosphorylated agnoprotein migrate to the nucleus.

It localises to the host cytoplasm. Its subcellular location is the host nucleus membrane. The protein resides in the host rough endoplasmic reticulum membrane. It is found in the host cell membrane. In terms of biological role, alters the structure of the nuclear envelope by interacting with host CBX5 and disrupting CBX5 association with LBR. Involved in the perinuclear-nuclear localization of the capsid protein VP1 during virion assembly and maturation. Plays an important role in the release of progeny virions from infected cells and in viral propagation, probably by acting as a viral ionic channel in the host plasma membrane. Allows influx of extracellular calcium ions in the host cell. May contribute to viral genome transcription and translation of viral late proteins. The polypeptide is Agnoprotein (Simian virus 40 (SV40)).